We begin with the raw amino-acid sequence, 211 residues long: N-(5'-phosphoribosyl)anthranilate isomerase (211 aa).

Belongs to the TrpF family.

The catalysed reaction is N-(5-phospho-beta-D-ribosyl)anthranilate = 1-(2-carboxyphenylamino)-1-deoxy-D-ribulose 5-phosphate. Its pathway is amino-acid biosynthesis; L-tryptophan biosynthesis; L-tryptophan from chorismate: step 3/5. This chain is N-(5'-phosphoribosyl)anthranilate isomerase, found in Hyphomonas neptunium (strain ATCC 15444).